Reading from the N-terminus, the 696-residue chain is Elongation factor G (696 aa).

The region spanning 10–290 is the tr-type G domain; that stretch reads THFRNIGIAA…AVVDYLPSPL (281 aa). Residues 19 to 26, 89 to 93, and 143 to 146 contribute to the GTP site; these read AHIDAGKT, DTPGH, and NKMD.

Belongs to the TRAFAC class translation factor GTPase superfamily. Classic translation factor GTPase family. EF-G/EF-2 subfamily.

The protein resides in the cytoplasm. Functionally, catalyzes the GTP-dependent ribosomal translocation step during translation elongation. During this step, the ribosome changes from the pre-translocational (PRE) to the post-translocational (POST) state as the newly formed A-site-bound peptidyl-tRNA and P-site-bound deacylated tRNA move to the P and E sites, respectively. Catalyzes the coordinated movement of the two tRNA molecules, the mRNA and conformational changes in the ribosome. The protein is Elongation factor G of Deinococcus geothermalis (strain DSM 11300 / CIP 105573 / AG-3a).